The primary structure comprises 264 residues: 3-methyl-2-oxobutanoate hydroxymethyltransferase (264 aa).

Residues aspartate 45 and aspartate 84 each contribute to the Mg(2+) site. 3-methyl-2-oxobutanoate contacts are provided by residues aspartate 45–serine 46, aspartate 84, and lysine 112. Glutamate 114 lines the Mg(2+) pocket. The active-site Proton acceptor is glutamate 181.

It belongs to the PanB family. Homodecamer; pentamer of dimers. Mg(2+) is required as a cofactor.

The protein resides in the cytoplasm. The catalysed reaction is 3-methyl-2-oxobutanoate + (6R)-5,10-methylene-5,6,7,8-tetrahydrofolate + H2O = 2-dehydropantoate + (6S)-5,6,7,8-tetrahydrofolate. It participates in cofactor biosynthesis; (R)-pantothenate biosynthesis; (R)-pantoate from 3-methyl-2-oxobutanoate: step 1/2. Catalyzes the reversible reaction in which hydroxymethyl group from 5,10-methylenetetrahydrofolate is transferred onto alpha-ketoisovalerate to form ketopantoate. This Escherichia fergusonii (strain ATCC 35469 / DSM 13698 / CCUG 18766 / IAM 14443 / JCM 21226 / LMG 7866 / NBRC 102419 / NCTC 12128 / CDC 0568-73) protein is 3-methyl-2-oxobutanoate hydroxymethyltransferase.